The chain runs to 1050 residues: Atrial natriuretic peptide receptor 2 (1050 aa).

An N-terminal signal peptide occupies residues 1–19 (MDLGHSLFVVFTCFLMARC). The Extracellular portion of the chain corresponds to 20–460 (RTEIGKNITV…FCNEDQLPVL (441 aa)). N-linked (GlcNAc...) asparagine glycosylation is found at N26 and N74. C84 and C110 are disulfide-bonded. 6 N-linked (GlcNAc...) asparagine glycosylation sites follow: N169, N203, N285, N352, N366, and N415. An intrachain disulfide couples C236 to C339. The helical transmembrane segment at 461-481 (GIVAVGSGLALIIFGISSFLI) threads the bilayer. Residues 482–1050 (YRKLKLEKEL…LGEKTDVYVI (569 aa)) are Cytoplasmic-facing. One can recognise a Protein kinase domain in the interval 517–790 (SRLTISQRGS…PDFSYIKIFV (274 aa)). Residues 865–995 (TIYFSDIVGF…DTVNTASRME (131 aa)) enclose the Guanylate cyclase domain.

The protein belongs to the adenylyl cyclase class-4/guanylyl cyclase family. Post-translationally, phosphorylated. Phosphorylation of the protein kinase-like domain is required for full activation by CNP. In terms of processing, glycosylated. High levels found in liver, atrium and gill. Moderate levels found in brain and ventricle, and low levels in esophageal sphincter, stomach, posterior intestine and kidney.

Its subcellular location is the cell membrane. The catalysed reaction is GTP = 3',5'-cyclic GMP + diphosphate. Functionally, receptor for the C-type natriuretic peptide NPPC/CNP hormone. Has guanylate cyclase activity upon binding of its ligand. May play a role in the regulation of skeletal growth. The chain is Atrial natriuretic peptide receptor 2 (npr2) from Anguilla japonica (Japanese eel).